We begin with the raw amino-acid sequence, 736 residues long: 1,4-alpha-glucan branching enzyme GlgB (736 aa).

Catalysis depends on Asp415, which acts as the Nucleophile. The active-site Proton donor is Glu470.

The protein belongs to the glycosyl hydrolase 13 family. GlgB subfamily. As to quaternary structure, monomer.

The enzyme catalyses Transfers a segment of a (1-&gt;4)-alpha-D-glucan chain to a primary hydroxy group in a similar glucan chain.. The protein operates within glycan biosynthesis; glycogen biosynthesis. Its function is as follows. Catalyzes the formation of the alpha-1,6-glucosidic linkages in glycogen by scission of a 1,4-alpha-linked oligosaccharide from growing alpha-1,4-glucan chains and the subsequent attachment of the oligosaccharide to the alpha-1,6 position. In Burkholderia cenocepacia (strain HI2424), this protein is 1,4-alpha-glucan branching enzyme GlgB.